Here is a 176-residue protein sequence, read N- to C-terminus: MGAPATRRCVEWLLGLYFLSHIPITLFMDLQAVLPRELYPVEFRNLLKWYAKEFKDPLLQEPPAWFKSFLFCELVFQLPFFPIATYAFLKGSCKWIRTPAIIYSVHTMTTLIPILSTFLFEDFSKASGFKGQRPETLHERLTLVSVYAPYLLIPFILLIFMLRSPYYKYEEKRKKK.

The Cytoplasmic segment spans residues 1–9 (MGAPATRRC). A helical membrane pass occupies residues 10–30 (VEWLLGLYFLSHIPITLFMDL). Residues 10 to 158 (VEWLLGLYFL…PYLLIPFILL (149 aa)) enclose the EXPERA domain. Topologically, residues 31-68 (QAVLPRELYPVEFRNLLKWYAKEFKDPLLQEPPAWFKS) are lumenal. A helical membrane pass occupies residues 69–89 (FLFCELVFQLPFFPIATYAFL). Cholesterol-binding residues include V75 and Q77. The Cytoplasmic segment spans residues 90 to 99 (KGSCKWIRTP). Residues 100–120 (AIIYSVHTMTTLIPILSTFLF) form a helical membrane-spanning segment. The required for interaction with Hst1/HTN1 stretch occupies residues 108–176 (MTTLIPILST…YKYEEKRKKK (69 aa)). The Lumenal portion of the chain corresponds to 121–140 (EDFSKASGFKGQRPETLHER). Residues 141–161 (LTLVSVYAPYLLIPFILLIFM) traverse the membrane as a helical segment. Residues 162–176 (LRSPYYKYEEKRKKK) are Cytoplasmic-facing. The short motif at 172 to 176 (KRKKK) is the ER retention motif element.

It belongs to the TMEM97/sigma-2 receptor family. As to quaternary structure, homodimer. Interacts with NPC1; the interaction impairs NPC1-mediated cholesterol transport. Interacts with PGRMC1 and LDLR; the interaction increases LDL internalization. Interacts with histatin 1/HTN1; the interaction induces HTN1-stimulating wound healing. Interacts with TSPO. Forms a complex with TSPO and PGRMC1; the interaction occurs in MIA PaCa-2 cells but not in MCF7 cells. In terms of tissue distribution, widely expressed in normal tissues. Expressed in pancreatic, renal, breast, colon, ovarian surface epithelial (OSE) cells. Highly expressed in various proliferating cancer cells.

The protein resides in the rough endoplasmic reticulum membrane. The protein localises to the nucleus membrane. Its function is as follows. Sigma-2 receptor which contributes to ameliorate dysfunctional cellular processes and slow degenerative progression by regulating cell functions including cholesterol biosynthesis/trafficking, membrane trafficking, autophagy, lipid membrane-bound protein trafficking, and receptor stabilization at the cell surface. Forms a ternary complex with PGRMC1 receptor and low density lipoprotein receptor/LDLR at the plasma membrane, which increases LDLR-mediated LDL cholesterol internalization. Decreases lysosomal sterol transporter NPC1 availability to the cell, probably through NPC1-binding, hence controlling lipid transport, including cholesterol and LBPA, outside of late endosome/lysosome. Binds regio- and stereoselective ligand 20(S)-hydroxycholesterol (20(S)-OHC) which enhances TMEM97-NPC1 interaction and decreases TMEM97-PGRMC1 and TMEM97-TSPO interactions, thereby linking OHC binding to cholesterol homeostasis. Also able to bind cholesterol. Binds histatin 1 (Hst 1)/HN1 salivary peptide at the ER membrane, which is critical for increasing mitochondria-ER contacts and stimulating Hst1 wound healing properties. May alter the activity of some cytochrome P450 proteins. Although shows homologies with sterol isomerases (EXPERA domain), not able to catalyze sterol isomerization. However, may act as sensors of these molecules. Acts as a quality control factor in the ER, promoting the proteolytic degradation of nonproductive and extramitochondrial precursor proteins in the ER membrane thus removing them from the ER surface. In Homo sapiens (Human), this protein is Sigma intracellular receptor 2.